The primary structure comprises 115 residues: Non-specific lipid-transfer protein (115 aa).

The first 24 residues, 1-24 (MASSAVTKLALVVALCMAVSVAHA), serve as a signal peptide directing secretion. Intrachain disulfides connect Cys-27–Cys-74, Cys-37–Cys-51, Cys-52–Cys-97, and Cys-72–Cys-111.

Belongs to the plant LTP family.

Functionally, plant non-specific lipid-transfer proteins transfer phospholipids as well as galactolipids across membranes. May play a role in wax or cutin deposition in the cell walls of expanding epidermal cells and certain secretory tissues. The protein is Non-specific lipid-transfer protein (MALD3) of Malus domestica (Apple).